We begin with the raw amino-acid sequence, 150 residues long: Ribosomal RNA large subunit methyltransferase H (150 aa).

S-adenosyl-L-methionine-binding positions include I71, A100, and 118 to 123 (LSEMTF).

Belongs to the RNA methyltransferase RlmH family. Homodimer.

The protein localises to the cytoplasm. The enzyme catalyses pseudouridine(1915) in 23S rRNA + S-adenosyl-L-methionine = N(3)-methylpseudouridine(1915) in 23S rRNA + S-adenosyl-L-homocysteine + H(+). Specifically methylates the pseudouridine at position 1915 (m3Psi1915) in 23S rRNA. This chain is Ribosomal RNA large subunit methyltransferase H, found in Helicobacter acinonychis (strain Sheeba).